The primary structure comprises 367 residues: o-succinylbenzoate synthase (367 aa).

Catalysis depends on Lys164, which acts as the Proton donor. Residues Asp189, Glu214, and Asp239 each contribute to the Mg(2+) site. Catalysis depends on Lys263, which acts as the Proton acceptor.

This sequence belongs to the mandelate racemase/muconate lactonizing enzyme family. MenC type 2 subfamily. Homodimer. A divalent metal cation is required as a cofactor.

The enzyme catalyses (1R,6R)-6-hydroxy-2-succinyl-cyclohexa-2,4-diene-1-carboxylate = 2-succinylbenzoate + H2O. It participates in quinol/quinone metabolism; 1,4-dihydroxy-2-naphthoate biosynthesis; 1,4-dihydroxy-2-naphthoate from chorismate: step 4/7. The protein operates within quinol/quinone metabolism; menaquinone biosynthesis. In terms of biological role, converts 2-succinyl-6-hydroxy-2,4-cyclohexadiene-1-carboxylate (SHCHC) to 2-succinylbenzoate (OSB). Also acts as a N-succinylamino acid racemase (NSAR) that catalyzes the racemization of N-succinyl-L-phenylglycine. Since the gene is encoded in a menaquinone synthesis operon, OSB synthase is probably the physiological activity. A pathway that requires NSAR activity has not been identified in this species, so whether NSAR is also a biological activity is unknown. In Enterococcus faecalis (strain ATCC 700802 / V583), this protein is o-succinylbenzoate synthase.